Consider the following 855-residue polypeptide: Coiled-coil domain-containing protein 87 (855 aa).

Disordered stretches follow at residues 23 to 43 (LFPS…QDAT) and 278 to 302 (SRPS…PTSP). Over residues 287–296 (PSHSPSSESH) the composition is skewed to low complexity. 2 coiled-coil regions span residues 387–413 (TRRL…EASG) and 764–789 (RSYL…ESVF).

It belongs to the CCDC87 family. As to expression, specifically expressed in testis (at protein level). Not detected in other tissues tested (at protein level). In the testis, localizes to pachytene spermatocytes and spermatids.

Plays a role in spermatogenesis, where it is important for normal sperm head morphology. Also required for the acrosome reaction and thus normal male fertility. The sequence is that of Coiled-coil domain-containing protein 87 (Ccdc87) from Mus musculus (Mouse).